The sequence spans 445 residues: UDP-N-acetylglucosamine--peptide N-acetylglucosaminyltransferase stabilizing protein GtfB (445 aa).

The segment at 55 to 171 is glycosyltransferase 1; the sequence is KPLYFNQVPV…TLPGQSMRYF (117 aa).

It belongs to the GtfB family. As to quaternary structure, interacts with glycosyltransferase GtfA; probably forms a heterotetramer with 2 subunits each of GtfA and GtfB. Part of the accessory SecA2/SecY2 protein translocation apparatus.

Its subcellular location is the cell membrane. It functions in the pathway protein modification; protein glycosylation. Required for the polymorphic O-glycosylation of the serine-rich repeat protein PsrP. A stabilizing protein that is part of the accessory SecA2/SecY2 system specifically required to export serine-rich repeat cell wall proteins encoded upstream in the same operon. The GtfA-GtfB complex adds GlcNAc from UDP-GlcNAc to PsrP, attaching the first sugar residue. Stabilizes the glycosylation activity of GtfA. Has no N-acetylglucosaminyl transferase activity on its own. The protein is UDP-N-acetylglucosamine--peptide N-acetylglucosaminyltransferase stabilizing protein GtfB of Streptococcus pneumoniae serotype 4 (strain ATCC BAA-334 / TIGR4).